The primary structure comprises 729 residues: Sodium-dependent neutral amino acid transporter B(0)AT2 (729 aa).

Over 1–69 the chain is Cytoplasmic; the sequence is MPKNSKVVKR…ARPAWNSKLQ (69 aa). 2 positions are modified to phosphoserine: Ser-25 and Ser-55. 3 helical membrane-spanning segments follow: residues 70-90, 98-117, and 142-162; these read YILA…FPYL, AYLL…LFFL, and GIGF…NVII. The Extracellular segment spans residues 163-225; that stretch reads GWSLFYFSQS…TSISESGGLN (63 aa). N-linked (GlcNAc...) asparagine glycosylation is found at Asn-187 and Asn-213. A run of 4 helical transmembrane segments spans residues 226-244, 253-270, 306-323, and 335-356; these read WKMT…LAMI, IMYF…CFLI, VFFA…FSSY, and VLVS…FAVL. The Extracellular segment spans residues 357–452; the sequence is GFKANVINEK…FIAFTEAMTH (96 aa). N-linked (GlcNAc...) asparagine glycosylation is found at Asn-383 and Asn-394. 5 helical membrane-spanning segments follow: residues 453-472, 496-514, 530-550, 571-592, and 620-642; these read FPAS…NLGL, ILTV…IFVQ, TLPL…VYGI, YMWK…IVNM, and VICI…IRRC. Residues 643-729 lie on the Cytoplasmic side of the membrane; the sequence is NLIDDSSGNL…DMPDMPESDL (87 aa). 3 positions are modified to phosphoserine: Ser-687, Ser-699, and Ser-701.

The protein belongs to the sodium:neurotransmitter symporter (SNF) (TC 2.A.22) family. SLC6A15 subfamily.

It localises to the membrane. It catalyses the reaction L-leucine(in) + Na(+)(in) = L-leucine(out) + Na(+)(out). The catalysed reaction is L-isoleucine(in) + Na(+)(in) = L-isoleucine(out) + Na(+)(out). It carries out the reaction L-methionine(in) + Na(+)(in) = L-methionine(out) + Na(+)(out). The enzyme catalyses L-proline(in) + Na(+)(in) = L-proline(out) + Na(+)(out). It catalyses the reaction L-alanine(in) + Na(+)(in) = L-alanine(out) + Na(+)(out). The catalysed reaction is L-asparagine(in) + Na(+)(in) = L-asparagine(out) + Na(+)(out). It carries out the reaction L-valine(in) + Na(+)(in) = L-valine(out) + Na(+)(out). The enzyme catalyses L-cysteine(in) + Na(+)(in) = L-cysteine(out) + Na(+)(out). It catalyses the reaction L-glutamine(in) + Na(+)(in) = L-glutamine(out) + Na(+)(out). The catalysed reaction is L-serine(in) + Na(+)(in) = L-serine(out) + Na(+)(out). It carries out the reaction L-threonine(in) + Na(+)(in) = L-threonine(out) + Na(+)(out). The enzyme catalyses L-pipecolate(in) + Na(+)(in) = L-pipecolate(out) + Na(+)(out). It catalyses the reaction L-phenylalanine(in) + Na(+)(in) = L-phenylalanine(out) + Na(+)(out). Its function is as follows. Functions as a sodium-dependent neutral amino acid transporter. Exhibits preference for the branched-chain amino acids, particularly leucine, valine and isoleucine and methionine. Can also transport low-affinity substrates such as alanine, phenylalanine, glutamine and pipecolic acid. Mediates the saturable, pH-sensitive and electrogenic cotransport of proline and sodium ions with a stoichiometry of 1:1. May have a role as transporter for neurotransmitter precursors into neurons. In contrast to other members of the neurotransmitter transporter family, does not appear to be chloride-dependent. The chain is Sodium-dependent neutral amino acid transporter B(0)AT2 (SLC6A15) from Bos taurus (Bovine).